Reading from the N-terminus, the 140-residue chain is Nucleoside diphosphate kinase (140 aa).

Positions 11, 59, 87, 93, 104, and 114 each coordinate ATP. His-117 functions as the Pros-phosphohistidine intermediate in the catalytic mechanism.

This sequence belongs to the NDK family. As to quaternary structure, homotetramer. Requires Mg(2+) as cofactor.

The protein localises to the cytoplasm. It catalyses the reaction a 2'-deoxyribonucleoside 5'-diphosphate + ATP = a 2'-deoxyribonucleoside 5'-triphosphate + ADP. It carries out the reaction a ribonucleoside 5'-diphosphate + ATP = a ribonucleoside 5'-triphosphate + ADP. Major role in the synthesis of nucleoside triphosphates other than ATP. The ATP gamma phosphate is transferred to the NDP beta phosphate via a ping-pong mechanism, using a phosphorylated active-site intermediate. This is Nucleoside diphosphate kinase from Paracoccus denitrificans (strain Pd 1222).